Consider the following 110-residue polypeptide: Flagellar hook-basal body complex protein FliE (110 aa).

The protein belongs to the FliE family.

The protein resides in the bacterial flagellum basal body. This chain is Flagellar hook-basal body complex protein FliE, found in Pseudomonas putida (strain GB-1).